We begin with the raw amino-acid sequence, 93 residues long: Large ribosomal subunit protein uL23 (93 aa).

Belongs to the universal ribosomal protein uL23 family. In terms of assembly, part of the 50S ribosomal subunit. Contacts protein L29, and trigger factor when it is bound to the ribosome.

In terms of biological role, one of the early assembly proteins it binds 23S rRNA. One of the proteins that surrounds the polypeptide exit tunnel on the outside of the ribosome. Forms the main docking site for trigger factor binding to the ribosome. This is Large ribosomal subunit protein uL23 from Campylobacter jejuni subsp. doylei (strain ATCC BAA-1458 / RM4099 / 269.97).